Reading from the N-terminus, the 51-residue chain is Small integral membrane protein 38 (51 aa).

The chain crosses the membrane as a helical span at residues 13–33 (PLLALLVVILLARLILWSCLG).

The protein resides in the membrane. The chain is Small integral membrane protein 38 from Homo sapiens (Human).